The following is a 159-amino-acid chain: Eukaryotic translation initiation factor 5A-1 (159 aa).

The span at 1 to 12 (MSDEEHHFESKA) shows a compositional bias: basic and acidic residues. The disordered stretch occupies residues 1–23 (MSDEEHHFESKADAGASKTYPQQ). Lys52 is modified (hypusine).

This sequence belongs to the eIF-5A family. Lys-52 undergoes hypusination, a unique post-translational modification that consists in the addition of a butylamino group from spermidine to lysine side chain, leading to the formation of the unusual amino acid hypusine. eIF-5As are the only known proteins to undergo this modification, which is essential for their function.

Translation factor that promotes translation elongation and termination, particularly upon ribosome stalling at specific amino acid sequence contexts. Binds between the exit (E) and peptidyl (P) site of the ribosome and promotes rescue of stalled ribosome: specifically required for efficient translation of polyproline-containing peptides as well as other motifs that stall the ribosome. Acts as a ribosome quality control (RQC) cofactor by joining the RQC complex to facilitate peptidyl transfer during CAT tailing step. The protein is Eukaryotic translation initiation factor 5A-1 of Solanum lycopersicum (Tomato).